We begin with the raw amino-acid sequence, 120 residues long: Histone H2B (120 aa).

A disordered region spans residues 1–26; the sequence is MAEPAKKKPKKLPKKDKGQKDIKRKK. Residue Ala2 is modified to Blocked amino end (Ala). N6-acetyllysine occurs at positions 7, 10, and 11. Lys115 participates in a covalent cross-link: Glycyl lysine isopeptide (Lys-Gly) (interchain with G-Cter in ubiquitin).

The protein belongs to the histone H2B family. The nucleosome is a histone octamer containing two molecules each of H2A, H2B, H3 and H4 assembled in one H3-H4 heterotetramer and two H2A-H2B heterodimers. The octamer wraps approximately 147 bp of DNA. Post-translationally, can be acetylated to form H2BK6ac, H2BK33ac and H2BK34ac. Monoubiquitinated to form H2BK143ub1; may give a specific tag for epigenetic transcriptional activation.

It localises to the nucleus. It is found in the chromosome. Functionally, core component of nucleosome. Nucleosomes wrap and compact DNA into chromatin, limiting DNA accessibility to the cellular machineries which require DNA as a template. Histones thereby play a central role in transcription regulation, DNA repair, DNA replication and chromosomal stability. DNA accessibility is regulated via a complex set of post-translational modifications of histones, also called histone code, and nucleosome remodeling. The sequence is that of Histone H2B from Pisum sativum (Garden pea).